The sequence spans 230 residues: 2,3-bisphosphoglycerate-dependent phosphoglycerate mutase 1 (230 aa).

Residues 8–15, 21–22, Arg-60, 87–90, Lys-98, 114–115, and 183–184 each bind substrate; these read RHGQSEWN, TG, ERHY, RR, and GN. His-9 acts as the Tele-phosphohistidine intermediate in catalysis. Glu-87 acts as the Proton donor/acceptor in catalysis.

This sequence belongs to the phosphoglycerate mutase family. BPG-dependent PGAM subfamily.

It catalyses the reaction (2R)-2-phosphoglycerate = (2R)-3-phosphoglycerate. It functions in the pathway carbohydrate degradation; glycolysis; pyruvate from D-glyceraldehyde 3-phosphate: step 3/5. In terms of biological role, catalyzes the interconversion of 2-phosphoglycerate and 3-phosphoglycerate. This chain is 2,3-bisphosphoglycerate-dependent phosphoglycerate mutase 1, found in Lactobacillus johnsonii (strain CNCM I-12250 / La1 / NCC 533).